The sequence spans 306 residues: MPRDRLKELQEKATVNTIHAYNYDPPARKYDVESQPLINQDADFEMFLERCSNIRGGLKSLEEDYDAVVQLHGALLSTPGADSENSNKLKSHNQMFFSKAEQIKNSLKILSEETSRIPTTACGIMRAKSDQVKSIYKTFENIMLNFNREQDEYKEKAKRKIVDYLKIRNMQLSDEEIENAVSSGNLSEVTKGVMLALNEKKALYDEVKSRADELKNLERQMGELAQMFHDLHIMVVSQAKMVDSIVNSVENATEYAKQARGNVEEARNLQKRARKMKVCIIIGSIIAVLILILFIQSAVCHFTPIC.

At 1 to 279 the chain is on the cytoplasmic side; the sequence is MPRDRLKELQ…QKRARKMKVC (279 aa). The interval 40 to 180 is required for the regulation of the defecation motor program; it reads QDADFEMFLE…QLSDEEIENA (141 aa). Positions 204–266 constitute a t-SNARE coiled-coil homology domain; sequence YDEVKSRADE…KQARGNVEEA (63 aa). The chain crosses the membrane as a helical; Anchor for type IV membrane protein span at residues 280 to 300; that stretch reads IIIGSIIAVLILILFIQSAVC. Over 301 to 306 the chain is Extracellular; it reads HFTPIC.

The protein belongs to the syntaxin family. As to expression, expressed in body wall, pharyngeal, vulval and enteric muscles and in some head neurons.

It localises to the cell membrane. Its function is as follows. Potentially involved in docking of synaptic vesicles at presynaptic active zones. Acts in the intestine to regulate anterior body muscle contractions (aBOC) and the expulsion steps during the defecation motor program (DMP). The sequence is that of Putative syntaxin-3 from Caenorhabditis elegans.